The sequence spans 570 residues: Proline--tRNA ligase (570 aa).

Belongs to the class-II aminoacyl-tRNA synthetase family. ProS type 1 subfamily. Homodimer.

It localises to the cytoplasm. It carries out the reaction tRNA(Pro) + L-proline + ATP = L-prolyl-tRNA(Pro) + AMP + diphosphate. In terms of biological role, catalyzes the attachment of proline to tRNA(Pro) in a two-step reaction: proline is first activated by ATP to form Pro-AMP and then transferred to the acceptor end of tRNA(Pro). As ProRS can inadvertently accommodate and process non-cognate amino acids such as alanine and cysteine, to avoid such errors it has two additional distinct editing activities against alanine. One activity is designated as 'pretransfer' editing and involves the tRNA(Pro)-independent hydrolysis of activated Ala-AMP. The other activity is designated 'posttransfer' editing and involves deacylation of mischarged Ala-tRNA(Pro). The misacylated Cys-tRNA(Pro) is not edited by ProRS. The sequence is that of Proline--tRNA ligase from Wolinella succinogenes (strain ATCC 29543 / DSM 1740 / CCUG 13145 / JCM 31913 / LMG 7466 / NCTC 11488 / FDC 602W) (Vibrio succinogenes).